A 719-amino-acid polypeptide reads, in one-letter code: Glutamate--tRNA ligase, cytoplasmic (719 aa).

ATP is bound at residue Ser93. The interval 176–205 is disordered; that stretch reads SGKPVAAPKSKDSQQAVKGDGQDKGKPEVD. A compositionally biased stretch (basic and acidic residues) spans 195–204; it reads DGQDKGKPEV. 217 to 219 lines the L-glutamate pocket; sequence RFA. The 'HIGH' region motif lies at 220 to 230; that stretch reads PEPSGYLHIGH. Residue His227 coordinates ATP. Residues 393–397 and Arg411 each bind L-glutamate; that span reads YDFAC. ATP is bound by residues Glu414 and 448–452; that span reads LLSKR. Residues 448-452 carry the 'KMSKS' region motif; that stretch reads LLSKR.

The protein belongs to the class-I aminoacyl-tRNA synthetase family. Glutamate--tRNA ligase type 2 subfamily. In terms of assembly, interacts with GLN2, COL4 and RPP13L4/ZAR1.

The protein resides in the cytoplasm. It localises to the cytosol. It catalyses the reaction tRNA(Glu) + L-glutamate + ATP = L-glutamyl-tRNA(Glu) + AMP + diphosphate. Functionally, catalyzes the attachment of glutamate to tRNA(Glu) in a two-step reaction: glutamate is first activated by ATP to form Glu-AMP and then transferred to the acceptor end of tRNA(Glu). This chain is Glutamate--tRNA ligase, cytoplasmic, found in Arabidopsis thaliana (Mouse-ear cress).